A 305-amino-acid polypeptide reads, in one-letter code: Aspartate carbamoyltransferase catalytic subunit (305 aa).

2 residues coordinate carbamoyl phosphate: R54 and T55. An L-aspartate-binding site is contributed by K82. The carbamoyl phosphate site is built by R104, H132, and Q135. L-aspartate-binding residues include R165 and R218. Carbamoyl phosphate contacts are provided by G259 and P260.

Belongs to the aspartate/ornithine carbamoyltransferase superfamily. ATCase family. In terms of assembly, heterododecamer (2C3:3R2) of six catalytic PyrB chains organized as two trimers (C3), and six regulatory PyrI chains organized as three dimers (R2).

The enzyme catalyses carbamoyl phosphate + L-aspartate = N-carbamoyl-L-aspartate + phosphate + H(+). The protein operates within pyrimidine metabolism; UMP biosynthesis via de novo pathway; (S)-dihydroorotate from bicarbonate: step 2/3. Functionally, catalyzes the condensation of carbamoyl phosphate and aspartate to form carbamoyl aspartate and inorganic phosphate, the committed step in the de novo pyrimidine nucleotide biosynthesis pathway. In Caldicellulosiruptor bescii (strain ATCC BAA-1888 / DSM 6725 / KCTC 15123 / Z-1320) (Anaerocellum thermophilum), this protein is Aspartate carbamoyltransferase catalytic subunit.